Here is a 1080-residue protein sequence, read N- to C-terminus: Myocardin-related transcription factor B (1080 aa).

The stretch at 40 to 65 (EVLQLRLQQRRTREQLVDQGIMPPLK) is one RPEL 1 repeat. Serine 66 is modified (phosphoserine). RPEL repeat units lie at residues 84 to 109 (NFLKHKIRSRPDRSELVRMHILEETF) and 128 to 153 (DDLNEKIAQRPGPMELVEKNILPVDS). Disordered regions lie at residues 170 to 222 (THGE…AQFT), 234 to 311 (TPLT…EPQM), 352 to 384 (PIKTDKNSSSGSNSGSSSSMPARRPGPLPSSLD), and 477 to 501 (PHVENAHSPLPISPSPSEQSSLSTD). 2 stretches are compositionally biased toward polar residues: residues 188–200 (QPASQESQGSAAS) and 240–259 (QPPTRSTAPVLPTNTVSSAK). Residues 272–287 (NPNDKHRSKKCKDPKP) show a composition bias toward basic and acidic residues. Low complexity predominate over residues 358–370 (NSSSGSNSGSSSS). Residues 383-417 (LDDLKVSELKTELKLRGLPVSGTKPDLIERLKPYQ) form the SAP domain. 3 positions are modified to phosphoserine: serine 531, serine 535, and serine 537. Residues 539 to 594 (SSSTLSTLELDAAEKDRKLQEKEKQIEELKRKLEQEQKLVEVLKMQLEVEKRGQQR) adopt a coiled-coil conformation. A required for interaction with itself and with MRTFA region spans residues 557–585 (LQEKEKQIEELKRKLEQEQKLVEVLKMQL). Disordered regions lie at residues 588–646 (EKRG…SVGQ) and 794–846 (LQYQ…PQQF). The segment covering 595–606 (PPDPQPSDPPHP) has biased composition (pro residues). Residue lysine 622 forms a Glycyl lysine isopeptide (Lys-Gly) (interchain with G-Cter in SUMO1) linkage. Positions 794 to 821 (LQYQRQPGPTNQQPFVSKTSNPALQSRT) are enriched in polar residues. The residue at position 913 (serine 913) is a Phosphoserine. Positions 969–988 (GTLPSATDTGPLQNSSEDRE) are disordered. Over residues 972-983 (PSATDTGPLQNS) the composition is skewed to polar residues.

As to quaternary structure, interacts with MRTFA and SRF. Post-translationally, O-glycosylated. As to expression, widely expressed. High expression in heart, brain and testis. Lower expression in lung, liver and kidney.

The protein resides in the nucleus. Acts as a transcriptional coactivator of serum response factor (SRF). Required for skeletal myogenic differentiation. The chain is Myocardin-related transcription factor B (Mrtfb) from Mus musculus (Mouse).